The following is an 80-amino-acid chain: Small ribosomal subunit protein bS18 (80 aa).

Belongs to the bacterial ribosomal protein bS18 family. As to quaternary structure, part of the 30S ribosomal subunit. Forms a tight heterodimer with protein bS6.

Functionally, binds as a heterodimer with protein bS6 to the central domain of the 16S rRNA, where it helps stabilize the platform of the 30S subunit. The protein is Small ribosomal subunit protein bS18 of Staphylococcus saprophyticus subsp. saprophyticus (strain ATCC 15305 / DSM 20229 / NCIMB 8711 / NCTC 7292 / S-41).